The chain runs to 92 residues: Large ribosomal subunit protein eL43 (92 aa).

The C4-type zinc-finger motif lies at 39–60; that stretch reads CEFCGKYAVKRKAVGIWGCKAC.

Belongs to the eukaryotic ribosomal protein eL43 family.

This Gossypium hirsutum (Upland cotton) protein is Large ribosomal subunit protein eL43 (RPL37A).